Here is a 331-residue protein sequence, read N- to C-terminus: Putative serine/threonine-protein kinase ZK507.1 (331 aa).

One can recognise a Protein kinase domain in the interval 1–270 (MKVNEEGFAI…CKLTLKEPLV (270 aa)). Catalysis depends on aspartate 116, which acts as the Proton acceptor. Basic and acidic residues predominate over residues 302–314 (SDRNEENSLDRSK). The tract at residues 302–331 (SDRNEENSLDRSKTGTLSFNNSKNKKPSRY) is disordered.

Belongs to the protein kinase superfamily. Ser/Thr protein kinase family.

The enzyme catalyses L-seryl-[protein] + ATP = O-phospho-L-seryl-[protein] + ADP + H(+). It catalyses the reaction L-threonyl-[protein] + ATP = O-phospho-L-threonyl-[protein] + ADP + H(+). This Caenorhabditis elegans protein is Putative serine/threonine-protein kinase ZK507.1.